Reading from the N-terminus, the 353-residue chain is Photosystem II protein D1 (353 aa).

An N-acetylthreonine modification is found at T2. A Phosphothreonine modification is found at T2. 3 helical membrane-spanning segments follow: residues 29–46 (YIGW…TATS), 118–133 (HFLL…EWEL), and 142–156 (WIAV…AAAA). Residue H118 participates in chlorophyll a binding. Residue Y126 coordinates pheophytin a. D170 and E189 together coordinate [CaMn4O5] cluster. A helical membrane pass occupies residues 197–218 (FHMLGVAGVFGGSLFSAMHGSL). Residue H198 coordinates chlorophyll a. A quinone contacts are provided by residues H215 and 264-265 (SF). H215 is a binding site for Fe cation. H272 contacts Fe cation. A helical transmembrane segment spans residues 274–288 (FLAAWPVVGIWFTAL). The [CaMn4O5] cluster site is built by H332, E333, D342, and A344. Positions 345–353 (SVEAPSVKA) are excised as a propeptide.

This sequence belongs to the reaction center PufL/M/PsbA/D family. As to quaternary structure, PSII is composed of 1 copy each of membrane proteins PsbA, PsbB, PsbC, PsbD, PsbE, PsbF, PsbH, PsbI, PsbJ, PsbK, PsbL, PsbM, PsbT, PsbX, PsbY, PsbZ, Psb30/Ycf12, at least 3 peripheral proteins of the oxygen-evolving complex and a large number of cofactors. It forms dimeric complexes. Requires The D1/D2 heterodimer binds P680, chlorophylls that are the primary electron donor of PSII, and subsequent electron acceptors. It shares a non-heme iron and each subunit binds pheophytin, quinone, additional chlorophylls, carotenoids and lipids. D1 provides most of the ligands for the Mn4-Ca-O5 cluster of the oxygen-evolving complex (OEC). There is also a Cl(-1) ion associated with D1 and D2, which is required for oxygen evolution. The PSII complex binds additional chlorophylls, carotenoids and specific lipids. as cofactor. Tyr-161 forms a radical intermediate that is referred to as redox-active TyrZ, YZ or Y-Z. In terms of processing, C-terminally processed by CTPA; processing is essential to allow assembly of the oxygen-evolving complex and thus photosynthetic growth.

Its subcellular location is the plastid. It is found in the chloroplast thylakoid membrane. The enzyme catalyses 2 a plastoquinone + 4 hnu + 2 H2O = 2 a plastoquinol + O2. Functionally, photosystem II (PSII) is a light-driven water:plastoquinone oxidoreductase that uses light energy to abstract electrons from H(2)O, generating O(2) and a proton gradient subsequently used for ATP formation. It consists of a core antenna complex that captures photons, and an electron transfer chain that converts photonic excitation into a charge separation. The D1/D2 (PsbA/PsbD) reaction center heterodimer binds P680, the primary electron donor of PSII as well as several subsequent electron acceptors. The polypeptide is Photosystem II protein D1 (Angiopteris evecta (Mule's foot fern)).